Reading from the N-terminus, the 139-residue chain is Putative pre-16S rRNA nuclease (139 aa).

It belongs to the YqgF nuclease family.

It is found in the cytoplasm. In terms of biological role, could be a nuclease involved in processing of the 5'-end of pre-16S rRNA. In Pectobacterium atrosepticum (strain SCRI 1043 / ATCC BAA-672) (Erwinia carotovora subsp. atroseptica), this protein is Putative pre-16S rRNA nuclease.